The primary structure comprises 320 residues: Replication factor C small subunit 2 (320 aa).

44 to 51 lines the ATP pocket; sequence GPPGTGKT.

It belongs to the activator 1 small subunits family. RfcS subfamily. As to quaternary structure, heteromultimer composed of small subunits (RfcS) and large subunits (RfcL).

Functionally, part of the RFC clamp loader complex which loads the PCNA sliding clamp onto DNA. This is Replication factor C small subunit 2 from Pyrobaculum islandicum (strain DSM 4184 / JCM 9189 / GEO3).